A 781-amino-acid chain; its full sequence is Probable beta-D-xylosidase 5 (781 aa).

Residues 1-23 form the signal peptide; it reads MSIRRFVRLSLLIIALVSSLCES. Asparagine 43, asparagine 103, and asparagine 123 each carry an N-linked (GlcNAc...) asparagine glycan. Residue aspartate 291 is part of the active site. 6 N-linked (GlcNAc...) asparagine glycosylation sites follow: asparagine 342, asparagine 424, asparagine 504, asparagine 543, asparagine 601, and asparagine 653.

Belongs to the glycosyl hydrolase 3 family.

It localises to the secreted. The protein localises to the extracellular space. It is found in the extracellular matrix. In Arabidopsis thaliana (Mouse-ear cress), this protein is Probable beta-D-xylosidase 5 (BXL5).